The chain runs to 263 residues: Proliferating cell nuclear antigen (263 aa).

The DNA-binding element occupies 61–80 (RCDRNLSMGMNLNNMAKMLR).

It belongs to the PCNA family. In terms of assembly, homotrimer. Interacts with FEN1A. Interacts with POLL. Interacts with RAD/GEN1. Interacts with DJA7 and DJA8. As to expression, expressed in proliferating tissues. Expressed in roots and root apex. Expressed at low levels in young leaves. Not detected in mature leaves. Highly expressed in shoot apical meristem (SAM). Expressed in flag leaves and panicles.

The protein localises to the nucleus. This protein is an auxiliary protein of DNA polymerase delta and is involved in the control of eukaryotic DNA replication by increasing the polymerase's processibility during elongation of the leading strand. In Oryza sativa subsp. japonica (Rice), this protein is Proliferating cell nuclear antigen.